The primary structure comprises 324 residues: Acetyl-coenzyme A carboxylase carboxyl transferase subunit alpha (324 aa).

The region spanning 42–296 is the CoA carboxyltransferase C-terminal domain; the sequence is RLSELEEEVY…EKALTRLAEK (255 aa).

The protein belongs to the AccA family. Acetyl-CoA carboxylase is a heterohexamer composed of biotin carboxyl carrier protein (AccB), biotin carboxylase (AccC) and two subunits each of ACCase subunit alpha (AccA) and ACCase subunit beta (AccD).

The protein resides in the cytoplasm. It catalyses the reaction N(6)-carboxybiotinyl-L-lysyl-[protein] + acetyl-CoA = N(6)-biotinyl-L-lysyl-[protein] + malonyl-CoA. Its pathway is lipid metabolism; malonyl-CoA biosynthesis; malonyl-CoA from acetyl-CoA: step 1/1. In terms of biological role, component of the acetyl coenzyme A carboxylase (ACC) complex. First, biotin carboxylase catalyzes the carboxylation of biotin on its carrier protein (BCCP) and then the CO(2) group is transferred by the carboxyltransferase to acetyl-CoA to form malonyl-CoA. The protein is Acetyl-coenzyme A carboxylase carboxyl transferase subunit alpha of Shouchella clausii (strain KSM-K16) (Alkalihalobacillus clausii).